The following is a 595-amino-acid chain: Parathyroid hormone/parathyroid hormone-related peptide receptor (595 aa).

An N-terminal signal peptide occupies residues 1 to 28; sequence MGAVRIAPGLALLLCCPVLSSAYALVDA. Over 29–188 the chain is Extracellular; the sequence is DDVMTKEEQI…REREVFDRLG (160 aa). Cystine bridges form between Cys48–Cys117, Cys108–Cys148, and Cys131–Cys170. A disordered region spans residues 66–103; sequence DKGWASASTSGKPKKEKASGKLYPESEEDKEVPTGSRH. 4 N-linked (GlcNAc...) asparagine glycosylation sites follow: Asn151, Asn161, Asn166, and Asn176. A helical transmembrane segment spans residues 189–209; it reads MIYTVGYSVSLASLTVAVLIL. The Cytoplasmic portion of the chain corresponds to 210–223; sequence AYFRRLHCTRNYIH. Residues 224–244 form a helical membrane-spanning segment; the sequence is MHLFLSFMLRAVSIFVKDAVL. The Extracellular segment spans residues 245–294; the sequence is YSGATLDEAERLTEEELRAIAQAPPPPTAAAGYAGCRVAVTFFLYFLATN. The helical transmembrane segment at 295 to 315 threads the bilayer; the sequence is YYWILVEGLYLHSLIFMAFFS. Residues 316-318 lie on the Cytoplasmic side of the membrane; it reads EKK. The chain crosses the membrane as a helical span at residues 319–339; it reads YLWGFTVFGWGLPAVFVAVWV. The Extracellular segment spans residues 340–360; it reads SVRATLANTGCWDLSSGNKKW. Residues 361–381 form a helical membrane-spanning segment; it reads IIQVPILASIVLNFILFINIV. The Cytoplasmic segment spans residues 382-404; the sequence is RVLATKLRETNAGRCDTRQQYRK. Residues 405-425 form a helical membrane-spanning segment; it reads LLKSTLVLMPLFGVHYIVFMA. The Extracellular segment spans residues 426–439; that stretch reads TPYTEVSGTLWQVQ. A helical membrane pass occupies residues 440–460; the sequence is MHYEMLFNSFQGFFVAIIYCF. The Cytoplasmic segment spans residues 461–595; the sequence is CNGEVQAEIK…LLQEEWETVM (135 aa). The Important for interaction with G proteins signature appears at 473–476; the sequence is WSRW. Positions 528-595 are disordered; that stretch reads TTTATTNGHP…LLQEEWETVM (68 aa). A compositionally biased stretch (low complexity) spans 547–559; sequence APTLPATPPATAA. At Thr553 the chain carries Phosphothreonine.

This sequence belongs to the G-protein coupled receptor 2 family. As to quaternary structure, homodimer in the absence of bound ligand. Peptide hormone binding leads to dissociation of the homodimer. Post-translationally, N-glycosylated. High levels in the kidney, with much lower levels in aorta, heart, lung, prostate, testis, and skeletal muscle.

It localises to the cell membrane. In terms of biological role, G-protein-coupled receptor for parathyroid hormone (PTH) and for parathyroid hormone-related peptide (PTHLH). Ligand binding causes a conformation change that triggers signaling via guanine nucleotide-binding proteins (G proteins) and modulates the activity of downstream effectors, such as adenylate cyclase (cAMP). PTH1R is coupled to G(s) G alpha proteins and mediates activation of adenylate cyclase activity. PTHLH dissociates from PTH1R more rapidly than PTH; as consequence, the cAMP response induced by PTHLH decays faster than the response induced by PTH. This Canis lupus familiaris (Dog) protein is Parathyroid hormone/parathyroid hormone-related peptide receptor (PTH1R).